We begin with the raw amino-acid sequence, 183 residues long: ATP synthase subunit delta (183 aa).

It belongs to the ATPase delta chain family. F-type ATPases have 2 components, F(1) - the catalytic core - and F(0) - the membrane proton channel. F(1) has five subunits: alpha(3), beta(3), gamma(1), delta(1), epsilon(1). F(0) has three main subunits: a(1), b(2) and c(10-14). The alpha and beta chains form an alternating ring which encloses part of the gamma chain. F(1) is attached to F(0) by a central stalk formed by the gamma and epsilon chains, while a peripheral stalk is formed by the delta and b chains.

The protein localises to the cell inner membrane. F(1)F(0) ATP synthase produces ATP from ADP in the presence of a proton or sodium gradient. F-type ATPases consist of two structural domains, F(1) containing the extramembraneous catalytic core and F(0) containing the membrane proton channel, linked together by a central stalk and a peripheral stalk. During catalysis, ATP synthesis in the catalytic domain of F(1) is coupled via a rotary mechanism of the central stalk subunits to proton translocation. Its function is as follows. This protein is part of the stalk that links CF(0) to CF(1). It either transmits conformational changes from CF(0) to CF(1) or is implicated in proton conduction. The protein is ATP synthase subunit delta of Thermosipho africanus (strain TCF52B).